A 233-amino-acid polypeptide reads, in one-letter code: MGKTTKRFQELLKKVEENKIYNLDEAITTIKTLASAKFDETVEIALKLNVDPRHADQMVRGSVVLPAGTGKTVRVAVIAKDAKADEAKAAGADIVGSDELVEDIQKGIMNFDVLIATPNLMGLVGKVGRILGPKGLMPNPKTGTVTMDVAQAVNNAKSGQVNFRVDKQGNIHAGLGKVSFSKEQLNENISTFIKAINKHKPSASKGRYVKNASLSLTMSPSIALDTQEVMDLK.

The protein belongs to the universal ribosomal protein uL1 family. In terms of assembly, part of the 50S ribosomal subunit.

Functionally, binds directly to 23S rRNA. The L1 stalk is quite mobile in the ribosome, and is involved in E site tRNA release. Its function is as follows. Protein L1 is also a translational repressor protein, it controls the translation of the L11 operon by binding to its mRNA. This Campylobacter curvus (strain 525.92) protein is Large ribosomal subunit protein uL1.